A 450-amino-acid chain; its full sequence is Phosphoglucosamine mutase (450 aa).

Catalysis depends on Ser-103, which acts as the Phosphoserine intermediate. Residues Ser-103, Asp-243, Asp-245, and Asp-247 each coordinate Mg(2+). Position 103 is a phosphoserine (Ser-103).

It belongs to the phosphohexose mutase family. Mg(2+) is required as a cofactor. In terms of processing, activated by phosphorylation.

It catalyses the reaction alpha-D-glucosamine 1-phosphate = D-glucosamine 6-phosphate. Catalyzes the conversion of glucosamine-6-phosphate to glucosamine-1-phosphate. This chain is Phosphoglucosamine mutase, found in Lactobacillus helveticus (strain DPC 4571).